The chain runs to 24 residues: Heat shock 70 kDa protein 4L (24 aa).

Threonine 19 bears the Phosphothreonine mark.

It belongs to the heat shock protein 70 family. Homodimer. In the testis, forms a complex with p53 at 32.5 degrees Celsius which is scrotal temperature but not at 37 or 42 degrees Celsius. In terms of tissue distribution, expressed at high levels in testis and at much lower levels in brain. In testis, expressed mainly in germ cells. Widespread in brain with highest expression in cerebellum and medulla oblongata. Also expressed in renal medulla of water-restricted animals.

It is found in the cytoplasm. Its subcellular location is the nucleus. Functionally, possesses chaperone activity in vitro where it inhibits aggregation of citrate synthase. The protein is Heat shock 70 kDa protein 4L (Hspa4l) of Rattus norvegicus (Rat).